Consider the following 363-residue polypeptide: UDP-3-O-acylglucosamine N-acyltransferase (363 aa).

The active-site Proton acceptor is the H266.

Belongs to the transferase hexapeptide repeat family. LpxD subfamily. Homotrimer.

The catalysed reaction is a UDP-3-O-[(3R)-3-hydroxyacyl]-alpha-D-glucosamine + a (3R)-hydroxyacyl-[ACP] = a UDP-2-N,3-O-bis[(3R)-3-hydroxyacyl]-alpha-D-glucosamine + holo-[ACP] + H(+). It functions in the pathway bacterial outer membrane biogenesis; LPS lipid A biosynthesis. In terms of biological role, catalyzes the N-acylation of UDP-3-O-acylglucosamine using 3-hydroxyacyl-ACP as the acyl donor. Is involved in the biosynthesis of lipid A, a phosphorylated glycolipid that anchors the lipopolysaccharide to the outer membrane of the cell. The protein is UDP-3-O-acylglucosamine N-acyltransferase of Bordetella pertussis (strain Tohama I / ATCC BAA-589 / NCTC 13251).